Consider the following 137-residue polypeptide: Beta-synuclein (137 aa).

2 tandem repeats follow at residues 20 to 30 (EKTKQGVTEAA) and 31 to 41 (EKTKEGVLYVG). The segment at 20–67 (EKTKQGVTEAAEKTKEGVLYVGSKTKEGVVQGVASVAEKTKEQASHLG) is 4 X 11 AA tandem repeats of [EGS]-K-T-K-[EQ]-[GQ]-V-X(4). The stretch at 42–56 (SKTKEGVVQGVASVA) is one 3; approximate repeat. Repeat unit 4 spans residues 57–67 (EKTKEQASHLG). The segment covering 88-97 (EFPTDLKPEE) has biased composition (basic and acidic residues). The tract at residues 88–137 (EFPTDLKPEEVAQEAAEEPLIEPLMEPEGESYEDSPQEEYQEYEPEAKGP) is disordered. Over residues 98–131 (VAQEAAEEPLIEPLMEPEGESYEDSPQEEYQEYE) the composition is skewed to acidic residues. Residue S118 is modified to Phosphoserine; by BARK1, CK2 and GRK5.

Belongs to the synuclein family. Post-translationally, phosphorylated. Phosphorylation by G-protein coupled receptor kinases (GRK) is more efficient than phosphorylation by CK1, CK2 and CaM-kinase II. As to expression, expressed specifically in brain.

It localises to the cytoplasm. In terms of biological role, may be involved in neuronal plasticity. In Rattus norvegicus (Rat), this protein is Beta-synuclein (Sncb).